A 291-amino-acid polypeptide reads, in one-letter code: N-acetylmannosamine kinase (291 aa).

Residues 5 to 12 (AIDIGGTK) and 132 to 139 (GVGGGVVC) each bind ATP. Residues H156, C166, C168, and C173 each coordinate Zn(2+).

Belongs to the ROK (NagC/XylR) family. NanK subfamily. In terms of assembly, homodimer.

It catalyses the reaction an N-acyl-D-mannosamine + ATP = an N-acyl-D-mannosamine 6-phosphate + ADP + H(+). The protein operates within amino-sugar metabolism; N-acetylneuraminate degradation; D-fructose 6-phosphate from N-acetylneuraminate: step 2/5. In terms of biological role, catalyzes the phosphorylation of N-acetylmannosamine (ManNAc) to ManNAc-6-P. This Salmonella typhi protein is N-acetylmannosamine kinase.